Reading from the N-terminus, the 423-residue chain is Serine--tRNA ligase (423 aa).

Basic and acidic residues-rich tracts occupy residues 1-24 and 62-71; these read MIDLKQLRDDPDRVRESQRTRGED and KMRDASPEEK. Residues 1-71 are disordered; the sequence is MIDLKQLRDD…KMRDASPEEK (71 aa). 230–232 is an L-serine binding site; the sequence is TSE. ATP contacts are provided by residues 261 to 263 and V277; that span reads RRE. E284 contributes to the L-serine binding site. 348-351 contacts ATP; the sequence is ELTS. T383 provides a ligand contact to L-serine.

Belongs to the class-II aminoacyl-tRNA synthetase family. Type-1 seryl-tRNA synthetase subfamily. Homodimer. The tRNA molecule binds across the dimer.

The protein localises to the cytoplasm. It carries out the reaction tRNA(Ser) + L-serine + ATP = L-seryl-tRNA(Ser) + AMP + diphosphate + H(+). The catalysed reaction is tRNA(Sec) + L-serine + ATP = L-seryl-tRNA(Sec) + AMP + diphosphate + H(+). Its pathway is aminoacyl-tRNA biosynthesis; selenocysteinyl-tRNA(Sec) biosynthesis; L-seryl-tRNA(Sec) from L-serine and tRNA(Sec): step 1/1. In terms of biological role, catalyzes the attachment of serine to tRNA(Ser). Is also able to aminoacylate tRNA(Sec) with serine, to form the misacylated tRNA L-seryl-tRNA(Sec), which will be further converted into selenocysteinyl-tRNA(Sec). This Corynebacterium kroppenstedtii (strain DSM 44385 / JCM 11950 / CIP 105744 / CCUG 35717) protein is Serine--tRNA ligase.